Consider the following 413-residue polypeptide: Multifunctional CCA protein (413 aa).

ATP contacts are provided by Gly-8 and Arg-11. 2 residues coordinate CTP: Gly-8 and Arg-11. Mg(2+)-binding residues include Asp-21 and Asp-23. Arg-91, Arg-137, and Arg-140 together coordinate ATP. 3 residues coordinate CTP: Arg-91, Arg-137, and Arg-140. In terms of domain architecture, HD spans 228 to 329 (TGIHTLMVLE…VKLFDKADLW (102 aa)).

Belongs to the tRNA nucleotidyltransferase/poly(A) polymerase family. Bacterial CCA-adding enzyme type 1 subfamily. As to quaternary structure, monomer. Can also form homodimers and oligomers. Requires Mg(2+) as cofactor. It depends on Ni(2+) as a cofactor.

The enzyme catalyses a tRNA precursor + 2 CTP + ATP = a tRNA with a 3' CCA end + 3 diphosphate. The catalysed reaction is a tRNA with a 3' CCA end + 2 CTP + ATP = a tRNA with a 3' CCACCA end + 3 diphosphate. Catalyzes the addition and repair of the essential 3'-terminal CCA sequence in tRNAs without using a nucleic acid template. Adds these three nucleotides in the order of C, C, and A to the tRNA nucleotide-73, using CTP and ATP as substrates and producing inorganic pyrophosphate. tRNA 3'-terminal CCA addition is required both for tRNA processing and repair. Also involved in tRNA surveillance by mediating tandem CCA addition to generate a CCACCA at the 3' terminus of unstable tRNAs. While stable tRNAs receive only 3'-terminal CCA, unstable tRNAs are marked with CCACCA and rapidly degraded. This is Multifunctional CCA protein from Shewanella loihica (strain ATCC BAA-1088 / PV-4).